Here is a 407-residue protein sequence, read N- to C-terminus: L-cysteine:1D-myo-inositol 2-amino-2-deoxy-alpha-D-glucopyranoside ligase (407 aa).

Cysteine 43 provides a ligand contact to Zn(2+). L-cysteinyl-5'-AMP-binding positions include 43-46, threonine 58, and 81-83; these read CGIT and NAT. Positions 45–55 match the 'HIGH' region motif; the sequence is ITPYDATHLGH. Residues 183-188 carry the 'ERGGDP' region motif; sequence QRGGDP. Tryptophan 223 contributes to the L-cysteinyl-5'-AMP binding site. Cysteine 227 contacts Zn(2+). 245 to 247 provides a ligand contact to L-cysteinyl-5'-AMP; that stretch reads GSD. Histidine 252 is a binding site for Zn(2+). Residue valine 279 participates in L-cysteinyl-5'-AMP binding. Residues 285–289 carry the 'KMSKS' region motif; it reads KMSKS.

It belongs to the class-I aminoacyl-tRNA synthetase family. MshC subfamily. As to quaternary structure, monomer. Requires Zn(2+) as cofactor.

The enzyme catalyses 1D-myo-inositol 2-amino-2-deoxy-alpha-D-glucopyranoside + L-cysteine + ATP = 1D-myo-inositol 2-(L-cysteinylamino)-2-deoxy-alpha-D-glucopyranoside + AMP + diphosphate + H(+). Catalyzes the ATP-dependent condensation of GlcN-Ins and L-cysteine to form L-Cys-GlcN-Ins. The protein is L-cysteine:1D-myo-inositol 2-amino-2-deoxy-alpha-D-glucopyranoside ligase of Streptosporangium roseum (strain ATCC 12428 / DSM 43021 / JCM 3005 / KCTC 9067 / NCIMB 10171 / NRRL 2505 / NI 9100).